A 138-amino-acid polypeptide reads, in one-letter code: Outer membrane protein assembly factor BamE (138 aa).

A signal peptide spans 1–42 (MSHLTMIKTLNLRPFHSASALRKIVITSILGVAVTMSGCSLL).

It belongs to the BamE family. In terms of assembly, part of the Bam complex.

The protein localises to the cell outer membrane. Its function is as follows. Part of the outer membrane protein assembly complex, which is involved in assembly and insertion of beta-barrel proteins into the outer membrane. This Psychrobacter arcticus (strain DSM 17307 / VKM B-2377 / 273-4) protein is Outer membrane protein assembly factor BamE.